The primary structure comprises 365 residues: Protein SGT1 homolog (365 aa).

Ala-2 is subject to N-acetylalanine. TPR repeat units follow at residues 11–44 (SQRF…KPDD), 45–78 (AQYY…NPNN), and 79–112 (STAM…DIET). Residues 169 to 258 (QSKIKYDWYQ…PEAVRWEKLE (90 aa)) enclose the CS domain. A Phosphothreonine modification is found at Thr-265. Positions 276–365 (LYPSSSPYTR…PPDDMEWKKY (90 aa)) constitute an SGS domain. Ser-281 carries the phosphoserine modification. At Thr-284 the chain carries Phosphothreonine. Residue Lys-295 forms a Glycyl lysine isopeptide (Lys-Gly) (interchain with G-Cter in SUMO1); alternate linkage. A Glycyl lysine isopeptide (Lys-Gly) (interchain with G-Cter in SUMO2); alternate cross-link involves residue Lys-295. Ser-331 carries the phosphoserine modification.

This sequence belongs to the SGT1 family. As to quaternary structure, probably associates with SCF (SKP1-CUL1-F-box protein) complex through interaction with SKP1. Interacts with S100A6. Interacts with HSP90. Post-translationally, phosphorylated at Ser-281 and Ser-331, dephosphorylation promotes nuclear translocation, most likely due to disruption of the SUGT1-HSP90 complex.

The protein resides in the cytoplasm. It is found in the nucleus. Its function is as follows. May play a role in ubiquitination and subsequent proteasomal degradation of target proteins. The protein is Protein SGT1 homolog of Homo sapiens (Human).